The chain runs to 463 residues: Cysteine--tRNA ligase (463 aa).

Cys28 lines the Zn(2+) pocket. The 'HIGH' region motif lies at 30–40 (ITIYDLCHIGH). Positions 209, 234, and 238 each coordinate Zn(2+). The short motif at 266-270 (KMSKS) is the 'KMSKS' region element. ATP is bound at residue Lys269.

The protein belongs to the class-I aminoacyl-tRNA synthetase family. In terms of assembly, monomer. The cofactor is Zn(2+).

The protein resides in the cytoplasm. It catalyses the reaction tRNA(Cys) + L-cysteine + ATP = L-cysteinyl-tRNA(Cys) + AMP + diphosphate. The sequence is that of Cysteine--tRNA ligase from Proteus mirabilis (strain HI4320).